The sequence spans 349 residues: MKLSHFQFNLPDELLAEYPAENRDESRLMVVNRAKGTIEHKMFKDVLDYFDEGDVLVLNNTKVFPARLYGNKEKTGARIEVFLLRELNAEQRLWDVLVDPARKIRIGNKLYFGDDDSLVAEVIDNTTSRGRTLRFLYDGSYEEFRNKLTELGETPIPKYISREVTPEDAERYQTIYAKEEGAVAAPTAGLHFSKHLMKRLEIKGIQFAEVTLHVGLGTFNPVEVEDLSKHKMDSEELKITQEACDIVNAAKERKSRICAVGTTSMRAIESSVSSARTLNPYDGWTNKFIFPPHDFSLATCMITNFHTPKSTLMMMISAFCGHDLMKEAYAEAIKEKYKFYSYGDAMLII.

It belongs to the QueA family. As to quaternary structure, monomer.

The protein resides in the cytoplasm. It carries out the reaction 7-aminomethyl-7-carbaguanosine(34) in tRNA + S-adenosyl-L-methionine = epoxyqueuosine(34) in tRNA + adenine + L-methionine + 2 H(+). It functions in the pathway tRNA modification; tRNA-queuosine biosynthesis. Functionally, transfers and isomerizes the ribose moiety from AdoMet to the 7-aminomethyl group of 7-deazaguanine (preQ1-tRNA) to give epoxyqueuosine (oQ-tRNA). In Flavobacterium psychrophilum (strain ATCC 49511 / DSM 21280 / CIP 103535 / JIP02/86), this protein is S-adenosylmethionine:tRNA ribosyltransferase-isomerase.